The sequence spans 152 residues: Acyl carrier protein, mitochondrial (152 aa).

The region spanning 73-148 is the Carrier domain; the sequence is KLINERVLLV…DIIKYVADKE (76 aa). O-(pantetheine 4'-phosphoryl)serine is present on serine 108.

The protein belongs to the acyl carrier protein (ACP) family. In terms of assembly, complex I is composed of about 45 different subunits.

The protein resides in the mitochondrion. In terms of biological role, carrier of the growing fatty acid chain in fatty acid biosynthesis. Accessory and non-catalytic subunit of the mitochondrial membrane respiratory chain NADH dehydrogenase (Complex I), which functions in the transfer of electrons from NADH to the respiratory chain. This Drosophila melanogaster (Fruit fly) protein is Acyl carrier protein, mitochondrial.